An 833-amino-acid polypeptide reads, in one-letter code: Leucine--tRNA ligase (833 aa).

Positions 41 to 52 match the 'HIGH' region motif; sequence PYPSGAGLHVGH. Positions 610-614 match the 'KMSKS' region motif; that stretch reads KMSKS. An ATP-binding site is contributed by K613.

It belongs to the class-I aminoacyl-tRNA synthetase family.

Its subcellular location is the cytoplasm. It carries out the reaction tRNA(Leu) + L-leucine + ATP = L-leucyl-tRNA(Leu) + AMP + diphosphate. This is Leucine--tRNA ligase from Streptococcus pyogenes serotype M12 (strain MGAS2096).